We begin with the raw amino-acid sequence, 104 residues long: Large ribosomal subunit protein uL24 (104 aa).

It belongs to the universal ribosomal protein uL24 family. As to quaternary structure, part of the 50S ribosomal subunit.

In terms of biological role, one of two assembly initiator proteins, it binds directly to the 5'-end of the 23S rRNA, where it nucleates assembly of the 50S subunit. One of the proteins that surrounds the polypeptide exit tunnel on the outside of the subunit. The chain is Large ribosomal subunit protein uL24 from Rhodopseudomonas palustris (strain BisB18).